Reading from the N-terminus, the 469-residue chain is ATP synthase subunit beta (469 aa).

153-160 serves as a coordination point for ATP; the sequence is GGAGVGKT.

It belongs to the ATPase alpha/beta chains family. F-type ATPases have 2 components, CF(1) - the catalytic core - and CF(0) - the membrane proton channel. CF(1) has five subunits: alpha(3), beta(3), gamma(1), delta(1), epsilon(1). CF(0) has three main subunits: a(1), b(2) and c(9-12). The alpha and beta chains form an alternating ring which encloses part of the gamma chain. CF(1) is attached to CF(0) by a central stalk formed by the gamma and epsilon chains, while a peripheral stalk is formed by the delta and b chains.

The protein resides in the cell membrane. The enzyme catalyses ATP + H2O + 4 H(+)(in) = ADP + phosphate + 5 H(+)(out). Functionally, produces ATP from ADP in the presence of a proton gradient across the membrane. The catalytic sites are hosted primarily by the beta subunits. This chain is ATP synthase subunit beta, found in Pediococcus pentosaceus (strain ATCC 25745 / CCUG 21536 / LMG 10740 / 183-1w).